A 252-amino-acid chain; its full sequence is 2-succinyl-6-hydroxy-2,4-cyclohexadiene-1-carboxylate synthase (252 aa).

This sequence belongs to the AB hydrolase superfamily. MenH family. In terms of assembly, monomer.

The catalysed reaction is 5-enolpyruvoyl-6-hydroxy-2-succinyl-cyclohex-3-ene-1-carboxylate = (1R,6R)-6-hydroxy-2-succinyl-cyclohexa-2,4-diene-1-carboxylate + pyruvate. It participates in quinol/quinone metabolism; 1,4-dihydroxy-2-naphthoate biosynthesis; 1,4-dihydroxy-2-naphthoate from chorismate: step 3/7. The protein operates within quinol/quinone metabolism; menaquinone biosynthesis. Functionally, catalyzes a proton abstraction reaction that results in 2,5-elimination of pyruvate from 2-succinyl-5-enolpyruvyl-6-hydroxy-3-cyclohexene-1-carboxylate (SEPHCHC) and the formation of 2-succinyl-6-hydroxy-2,4-cyclohexadiene-1-carboxylate (SHCHC). The sequence is that of 2-succinyl-6-hydroxy-2,4-cyclohexadiene-1-carboxylate synthase from Escherichia coli O8 (strain IAI1).